A 488-amino-acid chain; its full sequence is Proline--tRNA ligase (488 aa).

The protein belongs to the class-II aminoacyl-tRNA synthetase family. ProS type 3 subfamily. In terms of assembly, homodimer.

The protein localises to the cytoplasm. It carries out the reaction tRNA(Pro) + L-proline + ATP = L-prolyl-tRNA(Pro) + AMP + diphosphate. In terms of biological role, catalyzes the attachment of proline to tRNA(Pro) in a two-step reaction: proline is first activated by ATP to form Pro-AMP and then transferred to the acceptor end of tRNA(Pro). Can inadvertently accommodate and process cysteine. The sequence is that of Proline--tRNA ligase (proS) from Borreliella burgdorferi (strain ATCC 35210 / DSM 4680 / CIP 102532 / B31) (Borrelia burgdorferi).